Reading from the N-terminus, the 89-residue chain is Small ribosomal subunit protein uS15 (89 aa).

It belongs to the universal ribosomal protein uS15 family. In terms of assembly, part of the 30S ribosomal subunit. Forms a bridge to the 50S subunit in the 70S ribosome, contacting the 23S rRNA.

Its function is as follows. One of the primary rRNA binding proteins, it binds directly to 16S rRNA where it helps nucleate assembly of the platform of the 30S subunit by binding and bridging several RNA helices of the 16S rRNA. In terms of biological role, forms an intersubunit bridge (bridge B4) with the 23S rRNA of the 50S subunit in the ribosome. This Parabacteroides distasonis (strain ATCC 8503 / DSM 20701 / CIP 104284 / JCM 5825 / NCTC 11152) protein is Small ribosomal subunit protein uS15.